The sequence spans 104 residues: NADH-ubiquinone oxidoreductase 12 kDa subunit, mitochondrial (104 aa).

It belongs to the complex I NDUFS6 subunit family. As to quaternary structure, complex I is composed of about 40 different subunits.

It is found in the mitochondrion inner membrane. In terms of biological role, accessory subunit of the mitochondrial membrane respiratory chain NADH dehydrogenase (Complex I), that is believed not to be involved in catalysis. Complex I functions in the transfer of electrons from NADH to the respiratory chain. The immediate electron acceptor for the enzyme is believed to be ubiquinone. This chain is NADH-ubiquinone oxidoreductase 12 kDa subunit, mitochondrial (nuo-12.3), found in Neurospora crassa (strain ATCC 24698 / 74-OR23-1A / CBS 708.71 / DSM 1257 / FGSC 987).